The following is a 214-amino-acid chain: Transmembrane emp24 domain-containing protein p24beta3 (214 aa).

The first 27 residues, 1-27 (MERRQAKIHVFVLIGLILLNSINQISS), serve as a signal peptide directing secretion. The Lumenal segment spans residues 28 to 178 (LSVTVNDEEC…RHTNESTRKR (151 aa)). The region spanning 35–122 (EECVQEYVLY…PETVSFYIHV (88 aa)) is the GOLD domain. Residues 140-158 (VNVKIAELREALESVVAEQ) adopt a coiled-coil conformation. 2 positions are modified to omega-N-methylated arginine: Arg164 and Arg169. An N-linked (GlcNAc...) asparagine glycan is attached at Asn172. The chain crosses the membrane as a helical span at residues 179–199 (VIFYTVGEYIFLAAASGLQVL). The Cytoplasmic segment spans residues 200 to 214 (YIRKLFSKSVAYNRV). Positions 204–205 (LF) match the COPII vesicle coat-binding motif. A COPI vesicle coat-binding motif is present at residues 204 to 214 (LFSKSVAYNRV). A Required for the export from the endoplasmic reticulum to the Golgi motif is present at residues 213–214 (RV).

Belongs to the EMP24/GP25L family. Probably oligomerizes with other members of the EMP24/GP25L family. Associates with the COPI vesicle coat (coatomer). Associates with the COPII vesicle coat (coatomer).

It localises to the golgi apparatus. The protein resides in the cis-Golgi network membrane. It is found in the golgi stack membrane. Involved in vesicular protein trafficking. Mainly functions in the early secretory pathway but also in post-Golgi membranes. Thought to act as cargo receptor at the lumenal side for incorporation of secretory cargo molecules into transport vesicles and to be involved in vesicle coat formation at the cytoplasmic side. The polypeptide is Transmembrane emp24 domain-containing protein p24beta3 (Arabidopsis thaliana (Mouse-ear cress)).